Here is a 438-residue protein sequence, read N- to C-terminus: Serine--tRNA ligase (438 aa).

245-247 is a binding site for L-serine; it reads TSE. Residue 276–278 participates in ATP binding; sequence RSE. Glutamate 299 is an L-serine binding site. An ATP-binding site is contributed by 363–366; sequence EISS. Serine 398 provides a ligand contact to L-serine.

The protein belongs to the class-II aminoacyl-tRNA synthetase family. Type-1 seryl-tRNA synthetase subfamily. Homodimer. The tRNA molecule binds across the dimer.

The protein resides in the cytoplasm. The enzyme catalyses tRNA(Ser) + L-serine + ATP = L-seryl-tRNA(Ser) + AMP + diphosphate + H(+). It catalyses the reaction tRNA(Sec) + L-serine + ATP = L-seryl-tRNA(Sec) + AMP + diphosphate + H(+). It functions in the pathway aminoacyl-tRNA biosynthesis; selenocysteinyl-tRNA(Sec) biosynthesis; L-seryl-tRNA(Sec) from L-serine and tRNA(Sec): step 1/1. Catalyzes the attachment of serine to tRNA(Ser). Is also able to aminoacylate tRNA(Sec) with serine, to form the misacylated tRNA L-seryl-tRNA(Sec), which will be further converted into selenocysteinyl-tRNA(Sec). In Verminephrobacter eiseniae (strain EF01-2), this protein is Serine--tRNA ligase.